A 443-amino-acid chain; its full sequence is Dynein regulatory complex protein 9 (443 aa).

Disordered regions lie at residues 1–34 and 415–443; these read MEED…TVEE and GFKM…GKKK. Residues 393 to 422 form the IQ domain; it reads ELKSVIKLQAWWRGTMIRREIGGFKMPKDK. A compositionally biased stretch (basic and acidic residues) spans 415 to 430; it reads GFKMPKDKVDSKDSKG. The segment covering 431–443 has biased composition (basic residues); the sequence is KGKGKDKRRGKKK.

Belongs to the DRC9 family. Component of the nexin-dynein regulatory complex (N-DRC). Interacts (via IQ domain) with CALM when calcium levels are low. Does not interact with CALM in the presence of Ca(2+). Interacts with the HSP70 proteins HSPA1L and HSPA8. May form a complex with CAMK4 and HSP70.

The protein localises to the cytoplasm. It is found in the cell projection. It localises to the cilium. The protein resides in the flagellum. Its subcellular location is the cytoskeleton. The protein localises to the flagellum axoneme. Its function is as follows. Component of the nexin-dynein regulatory complex (N-DRC), a key regulator of ciliary/flagellar motility which maintains the alignment and integrity of the distal axoneme and regulates microtubule sliding in motile axonemes. Binds calmodulin when cellular Ca(2+) levels are low and thereby contributes to the regulation of calcium and calmodulin-dependent protein kinase IV (CAMK4) activity; contributes to the regulation of CAMK4 signaling cascades. Required for normal axoneme assembly in sperm flagella, normal sperm tail formation and for male fertility. The polypeptide is Dynein regulatory complex protein 9 (IQCG) (Homo sapiens (Human)).